A 185-amino-acid chain; its full sequence is Adenine phosphoribosyltransferase (185 aa).

Belongs to the purine/pyrimidine phosphoribosyltransferase family. Homodimer.

It is found in the cytoplasm. It catalyses the reaction AMP + diphosphate = 5-phospho-alpha-D-ribose 1-diphosphate + adenine. The protein operates within purine metabolism; AMP biosynthesis via salvage pathway; AMP from adenine: step 1/1. Functionally, catalyzes a salvage reaction resulting in the formation of AMP, that is energically less costly than de novo synthesis. The chain is Adenine phosphoribosyltransferase from Kineococcus radiotolerans (strain ATCC BAA-149 / DSM 14245 / SRS30216).